Reading from the N-terminus, the 136-residue chain is Small ribosomal subunit protein uS8c (136 aa).

This sequence belongs to the universal ribosomal protein uS8 family. As to quaternary structure, part of the 30S ribosomal subunit.

The protein resides in the plastid. The protein localises to the chloroplast. One of the primary rRNA binding proteins, it binds directly to 16S rRNA central domain where it helps coordinate assembly of the platform of the 30S subunit. The chain is Small ribosomal subunit protein uS8c (rps8) from Morus indica (Mulberry).